The chain runs to 202 residues: Protein-methionine-sulfoxide reductase heme-binding subunit MsrQ (202 aa).

A run of 6 helical transmembrane segments spans residues 8–28, 42–62, 75–95, 110–130, 147–167, and 169–189; these read LAVF…AWIF, LGLG…LQKL, LGLW…VFIL, PYII…ITSN, LVYL…RADL, and EWTL…PSIA.

This sequence belongs to the MsrQ family. As to quaternary structure, heterodimer of a catalytic subunit (MsrP) and a heme-binding subunit (MsrQ). Requires FMN as cofactor. It depends on heme b as a cofactor.

It localises to the cell inner membrane. Part of the MsrPQ system that repairs oxidized periplasmic proteins containing methionine sulfoxide residues (Met-O), using respiratory chain electrons. Thus protects these proteins from oxidative-stress damage caused by reactive species of oxygen and chlorine generated by the host defense mechanisms. MsrPQ is essential for the maintenance of envelope integrity under bleach stress, rescuing a wide series of structurally unrelated periplasmic proteins from methionine oxidation. MsrQ provides electrons for reduction to the reductase catalytic subunit MsrP, using the quinone pool of the respiratory chain. The protein is Protein-methionine-sulfoxide reductase heme-binding subunit MsrQ of Pseudomonas aeruginosa (strain UCBPP-PA14).